The chain runs to 533 residues: Acid-sensing ion channel 3 (533 aa).

The Cytoplasmic segment spans residues 1-19; that stretch reads MKPRSGLEEAQRRQASDIR. The chain crosses the membrane as a helical span at residues 20–40; that stretch reads VFASSCTMHGLGHIFGPGGLT. Threonine 40 bears the Phosphothreonine; by PKC mark. The Extracellular segment spans residues 41-435; it reads LRRGLWATAV…EQKAAYEVSE (395 aa). Cystine bridges form between cysteine 93–cysteine 187, cysteine 165–cysteine 172, cysteine 283–cysteine 372, cysteine 317–cysteine 368, cysteine 321–cysteine 366, cysteine 330–cysteine 352, and cysteine 332–cysteine 344. Asparagine 176 is a glycosylation site (N-linked (GlcNAc...) asparagine). The segment at 286–310 is disordered; it reads ASLDPDDFDPEPSDPLGSPRPRPSP. Residue asparagine 400 is glycosylated (N-linked (GlcNAc...) asparagine). The chain crosses the membrane as a helical span at residues 436-456; the sequence is LLGDIGGQMGLFIGASLLTIL. Residues 449 to 451 carry the GAS motif; ion selectivity filter motif; the sequence is GAS. Residues 457 to 533 lie on the Cytoplasmic side of the membrane; the sequence is EILDYLCEVF…HRTCYLVTRL (77 aa). Position 523 is a phosphoserine; by PKC (serine 523). Residues 530–533 carry the PDZ-binding motif; the sequence is VTRL.

Belongs to the amiloride-sensitive sodium channel (TC 1.A.6) family. ASIC3 subfamily. As to quaternary structure, can form homotrimeric channels. Heterotrimer; forms functional heterotrimers producing channel with different properties. Forms heterotrimers with ASIC2; gives rise to a biphasic current with a sustained current which discriminates poorly between Na(+) and K(+). Interacts with STOM; inhibits ASIC3 acid-evoked current. Interacts with LIN7B (via PDZ domain); increases ASIC3 expression at the plasma membrane. Interacts with MAGI1 (via PDZ domain); probably regulates ASIC3. Interacts with GOPC (via PDZ domain); probably regulates ASIC3. Interacts with DLG4 (via PDZ domain); reduces ASIC3 expression at the plasma membrane. Post-translationally, could be phosphorylated by PKC, promoting activation of ASIC2/ASIC3 heterotrimers. As to expression, expressed in sciatic nerve and dorsal root ganglion (at protein level). Expressed in sensory neurons of dorsal root ganglion. Expressed in Golgi interneurons in the granular layer. Also found in superior cervical ganglia, spinal cord and brain stem.

The protein resides in the cell membrane. Its subcellular location is the cytoplasm. The catalysed reaction is Na(+)(in) = Na(+)(out). The enzyme catalyses K(+)(in) = K(+)(out). It catalyses the reaction Ca(2+)(in) = Ca(2+)(out). Its activity is regulated as follows. Inhibited by the diuretic drug amiloride. Inhibited by gadolinium ions. Inhibited by extracellular Ca(2+). Activated by lactate. Salicylic acid, diclofenac and aspirin inhibit the sustained current component. Activated by the vertebrate neuropeptides NPFF and NPSF, and the related FMRFamide. Specifically and reversibly inhibited by the a sea anemone toxin APETx2. ASIC3-containing channels are potentiated by the cono-RFamide CNF-Tx1.1, and probably CNF-Tx1.2 and CNF-Tx1.3 (AC P0DL71). In terms of biological role, forms pH-gated heterotrimeric sodium channels that act as postsynaptic excitatory receptors in the nervous system. Upon extracellular acidification, these channels generate a biphasic current with a fast inactivating and a slow sustained phase. ASIC3 is more sensitive to protons and gates between closed, open, and desensitized states faster than other ASICs. Displays high selectivity for sodium ions but can also permit the permeation of other cations. As a neuronal acid sensor, probably contributes to mechanoreception, acid nociception, and heat nociception. By forming heterotrimeric channels with ASIC2, generates a biphasic current with a fast inactivating and a slow sustained phase, which in sensory neurons is proposed to mediate the pain induced by acidosis that occurs in ischemic, damaged or inflamed tissues. This chain is Acid-sensing ion channel 3, found in Rattus norvegicus (Rat).